The primary structure comprises 230 residues: Ribosomal RNA large subunit methyltransferase E (230 aa).

Gly82, Trp84, Asp100, Asp116, and Asp140 together coordinate S-adenosyl-L-methionine. The Proton acceptor role is filled by Lys180.

Belongs to the class I-like SAM-binding methyltransferase superfamily. RNA methyltransferase RlmE family.

It localises to the cytoplasm. The catalysed reaction is uridine(2552) in 23S rRNA + S-adenosyl-L-methionine = 2'-O-methyluridine(2552) in 23S rRNA + S-adenosyl-L-homocysteine + H(+). Its function is as follows. Specifically methylates the uridine in position 2552 of 23S rRNA at the 2'-O position of the ribose in the fully assembled 50S ribosomal subunit. This Granulibacter bethesdensis (strain ATCC BAA-1260 / CGDNIH1) protein is Ribosomal RNA large subunit methyltransferase E.